The following is a 147-amino-acid chain: uncharacterized protein (147 aa).

4 helical membrane passes run 13–33, 45–65, 80–100, and 116–136; these read LSLV…IIGL, LFVG…AYFL, YLFT…LILI, and WGFF…IIPY.

The protein resides in the cell membrane. This is an uncharacterized protein from Methanocaldococcus jannaschii (strain ATCC 43067 / DSM 2661 / JAL-1 / JCM 10045 / NBRC 100440) (Methanococcus jannaschii).